The following is a 374-amino-acid chain: Probable tRNA pseudouridine synthase D (374 aa).

D81 (nucleophile) is an active-site residue. Residues 141–340 (VFPNYFDVQR…RKGFQKMYDL (200 aa)) form the TRUD domain.

Belongs to the pseudouridine synthase TruD family.

The catalysed reaction is uridine(13) in tRNA = pseudouridine(13) in tRNA. Functionally, could be responsible for synthesis of pseudouridine from uracil-13 in transfer RNAs. This chain is Probable tRNA pseudouridine synthase D, found in Nanoarchaeum equitans (strain Kin4-M).